The sequence spans 239 residues: MRTANGGPRARASPSASPADPGLPEGSERTEMRMRQMCGGSETQGPAPSQQGGRGSNACCFCWCCCCTCSCLTVRNQEDQRPQRASHEIRTDIPACEESPTPTLEEVCAWAQSFDNLMVTPAGRNAFREFLRTEFSEENMLFWMACEELKREANKSTIEEKARIIYEDYISILSPKEVSLDSRVREVINRNMVDPSQHIFDDAQLQIYTLMHRDSYPRFMNSTVYKDLLTSLAEKTVEA.

A disordered region spans residues 1-29 (MRTANGGPRARASPSASPADPGLPEGSER). Positions 8 to 19 (PRARASPSASPA) are enriched in low complexity. The RGS domain maps to 113–229 (SFDNLMVTPA…MNSTVYKDLL (117 aa)).

As to quaternary structure, forms a complex with G(alpha)z/i2 subunits and mu-opioid receptors; the formation of this complex results in mu-opioid receptor desensitization. Interacts with OPRM1. Post-translationally, fatty acylated. Heavily palmitoylated in the cysteine string motif. N- and O-glycosylated in synapsomal membranes. In terms of processing, serine phosphorylated in synapsomal membranes. Post-translationally, sumoylated with SUMO1, SUMO2 and SUMO3. Sumoylation increases binding to the G-proteins, G(alpha)-i2 and G(z), and interaction with mu-opioid receptors.

Its subcellular location is the membrane. The protein resides in the nucleus. The protein localises to the cytoplasm. Functionally, inhibits signal transduction by increasing the GTPase activity of G protein alpha subunits thereby driving them into their inactive GDP-bound form. Binds selectively to G(z)-alpha and G(alpha)-i2 subunits, accelerates their GTPase activity and regulates their signaling activities. The G(z)-alpha activity is inhibited by the phosphorylation and palmitoylation of the G-protein. Negatively regulates mu-opioid receptor-mediated activation of the G-proteins. This is Regulator of G-protein signaling 20 (Rgs20) from Mus musculus (Mouse).